The chain runs to 212 residues: Interleukin-6 (212 aa).

An N-terminal signal peptide occupies residues 1-29; it reads MTSFSTSAFRPVAFSLGLLLVMPAAFPAP. Residues Cys72 and Cys78 are joined by a disulfide bond. The N-linked (GlcNAc...) asparagine glycan is linked to Asn73. At Ser81 the chain carries Phosphoserine. Cys101 and Cys111 are joined by a disulfide. N-linked (GlcNAc...) asparagine glycosylation is found at Asn160 and Asn172.

It belongs to the IL-6 superfamily. In terms of assembly, component of a hexamer of two molecules each of IL6, IL6R and IL6ST; first binds to IL6R to associate with the signaling subunit IL6ST. Interacts with IL6R (via the N-terminal ectodomain); this interaction may be affected by IL6R-binding with SORL1, hence decreasing IL6 cis signaling. Interacts with SORL1 (via the N-terminal ectodomain); this interaction leads to IL6 internalization and lysosomal degradation. May form a trimeric complex with the soluble SORL1 ectodomain and soluble IL6R receptor; this interaction might stabilize circulating IL6, hence promoting IL6 trans signaling.

It is found in the secreted. Functionally, cytokine with a wide variety of biological functions in immunity, tissue regeneration, and metabolism. Binds to IL6R, then the complex associates to the signaling subunit IL6ST/gp130 to trigger the intracellular IL6-signaling pathway. The interaction with the membrane-bound IL6R and IL6ST stimulates 'classic signaling', whereas the binding of IL6 and soluble IL6R to IL6ST stimulates 'trans-signaling'. Alternatively, 'cluster signaling' occurs when membrane-bound IL6:IL6R complexes on transmitter cells activate IL6ST receptors on neighboring receiver cells. Its function is as follows. IL6 is a potent inducer of the acute phase response. Rapid production of IL6 contributes to host defense during infection and tissue injury, but excessive IL6 synthesis is involved in disease pathology. In the innate immune response, is synthesized by myeloid cells, such as macrophages and dendritic cells, upon recognition of pathogens through toll-like receptors (TLRs) at the site of infection or tissue injury. In the adaptive immune response, is required for the differentiation of B cells into immunoglobulin-secreting cells. Plays a major role in the differentiation of CD4(+) T cell subsets. Essential factor for the development of T follicular helper (Tfh) cells that are required for the induction of germinal-center formation. Required to drive naive CD4(+) T cells to the Th17 lineage. Also required for proliferation of myeloma cells and the survival of plasmablast cells. In terms of biological role, acts as an essential factor in bone homeostasis and on vessels directly or indirectly by induction of VEGF, resulting in increased angiogenesis activity and vascular permeability. Induces, through 'trans-signaling' and synergistically with IL1B and TNF, the production of VEGF. Involved in metabolic controls, is discharged into the bloodstream after muscle contraction increasing lipolysis and improving insulin resistance. 'Trans-signaling' in central nervous system also regulates energy and glucose homeostasis. Mediates, through GLP-1, crosstalk between insulin-sensitive tissues, intestinal L cells and pancreatic islets to adapt to changes in insulin demand. Also acts as a myokine. Plays a protective role during liver injury, being required for maintenance of tissue regeneration. Also has a pivotal role in iron metabolism by regulating HAMP/hepcidin expression upon inflammation or bacterial infection. Through activation of IL6ST-YAP-NOTCH pathway, induces inflammation-induced epithelial regeneration. This chain is Interleukin-6 (IL6), found in Saimiri sciureus (Common squirrel monkey).